We begin with the raw amino-acid sequence, 984 residues long: Ephrin type-B receptor 1 (984 aa).

Positions 1–17 (MALDCLLLFLLASAVAA) are cleaved as a signal peptide. Over 18–540 (MEETLMDTRT…YKSELREQLP (523 aa)) the chain is Extracellular. One can recognise an Eph LBD domain in the interval 19–201 (EETLMDTRTA…FFKKCPSIVQ (183 aa)). 2 Fibronectin type-III domains span residues 322–432 (VPSG…TNQA) and 433–528 (APST…TLTD). Asn-334, Asn-426, and Asn-480 each carry an N-linked (GlcNAc...) asparagine glycan. A helical membrane pass occupies residues 541-563 (LIAGSAAAGVVFVVSLVAISIVC). The Cytoplasmic portion of the chain corresponds to 564–984 (SRKRAYSKEA…QMNQSPSVMA (421 aa)). Position 600 is a phosphotyrosine (Tyr-600). The Protein kinase domain maps to 619–882 (VKIEEVIGAG…EIVNTLDKMI (264 aa)). ATP-binding positions include 625-633 (IGAGEFGEV) and Lys-651. Residue Asp-744 is the Proton acceptor of the active site. The SAM domain occupies 911–975 (TAFTTVDDWL…LSSIHSMRVQ (65 aa)). A Phosphotyrosine; by autocatalysis modification is found at Tyr-928. The short motif at 982–984 (VMA) is the PDZ-binding element.

Belongs to the protein kinase superfamily. Tyr protein kinase family. Ephrin receptor subfamily. Heterotetramer upon binding of the ligand. The heterotetramer is composed of an ephrin dimer and a receptor dimer. Oligomerization is probably required to induce biological responses. Interacts with EPHB6; transphosphorylates EPHB6 to form an active signaling complex. Interacts with PICK1. Interacts (through Tyr-594) with NCK1 (via SH2 domain); activates the JUN cascade to regulate cell adhesion. The ligand-activated form interacts (through Tyr-928) with GRB7 and GRB10 (via SH2 domains). The ligand-activated form interacts (residues within the catalytic domain) with GRB2 (via SH2 domain). Interacts with GRB2, SHC1 and SRC; activates the MAPK/ERK cascade to regulate cell migration. Interacts with CBL; regulates receptor degradation through ubiquitination. Interacts with ACP1. Post-translationally, phosphorylated. Autophosphorylation is stimulated by the ligand EFNB1. Required for interaction with SH2 domain-containing interactors, for activation of the MAPK/ERK and JUN signaling cascades and for ubiquitination by CBL. In terms of processing, ubiquitinated; (EFNB1)ligand-induced poly- and/or multi-ubiquitination by CBL is regulated by SRC and leads to lysosomal degradation. In terms of tissue distribution, restricted to brain and testes.

The protein localises to the cell membrane. The protein resides in the early endosome membrane. It is found in the cell projection. It localises to the dendrite. The catalysed reaction is L-tyrosyl-[protein] + ATP = O-phospho-L-tyrosyl-[protein] + ADP + H(+). Functionally, receptor tyrosine kinase which binds promiscuously transmembrane ephrin-B family ligands residing on adjacent cells, leading to contact-dependent bidirectional signaling into neighboring cells. The signaling pathway downstream of the receptor is referred to as forward signaling while the signaling pathway downstream of the ephrin ligand is referred to as reverse signaling. Cognate/functional ephrin ligands for this receptor include EFNB1, EFNB2 and EFNB3. During nervous system development, regulates retinal axon guidance redirecting ipsilaterally ventrotemporal retinal ganglion cells axons at the optic chiasm midline. This probably requires repulsive interaction with EFNB2. In the adult nervous system together with EFNB3, regulates chemotaxis, proliferation and polarity of the hippocampus neural progenitors. In addition to its role in axon guidance also plays an important redundant role with other ephrin-B receptors in development and maturation of dendritic spines and synapse formation. May also regulate angiogenesis. More generally, may play a role in targeted cell migration and adhesion. Upon activation by EFNB1 and probably other ephrin-B ligands activates the MAPK/ERK and the JNK signaling cascades to regulate cell migration and adhesion respectively. Involved in the maintenance of the pool of satellite cells (muscle stem cells) by promoting their self-renewal and reducing their activation and differentiation. The sequence is that of Ephrin type-B receptor 1 (Ephb1) from Rattus norvegicus (Rat).